The sequence spans 460 residues: Centrosomal protein CEP57L1 (460 aa).

The residue at position 49 (S49) is a Phosphoserine. Coiled-coil stretches lie at residues 51–228 (NSQA…EISK) and 317–384 (ISIC…LKKH). Over residues 399-410 (KMSEASGIQQED) the composition is skewed to polar residues. Residues 399–423 (KMSEASGIQQEDSYPKGSKNIKNSP) are disordered.

The protein belongs to the translokin family.

It is found in the cytoplasm. The protein localises to the cytoskeleton. Its subcellular location is the microtubule organizing center. It localises to the centrosome. In terms of biological role, centrosomal protein which may be required for microtubule attachment to centrosomes. The polypeptide is Centrosomal protein CEP57L1 (CEP57L1) (Homo sapiens (Human)).